Consider the following 53-residue polypeptide: Ovomucoid (53 aa).

The region spanning 3 to 53 (VDCSEYPQPTCTTEHRPVCGSNNETYGNKCNFCNAVVKSNGTLTVSHFGKC) is the Kazal-like domain. Cystine bridges form between cysteine 5–cysteine 35, cysteine 13–cysteine 32, and cysteine 21–cysteine 53. N-linked (GlcNAc...) asparagine glycosylation is present at asparagine 42.

It localises to the secreted. This is Ovomucoid from Polyplectron bicalcaratum (Grey peacock-pheasant).